Here is a 276-residue protein sequence, read N- to C-terminus: Rhamnulose-1-phosphate aldolase (276 aa).

E117 is an active-site residue. Residues H141, H143, and H212 each contribute to the Zn(2+) site.

The protein belongs to the aldolase class II family. RhaD subfamily. As to quaternary structure, homotetramer. Zn(2+) serves as cofactor.

It localises to the cytoplasm. It catalyses the reaction L-rhamnulose 1-phosphate = (S)-lactaldehyde + dihydroxyacetone phosphate. Its pathway is carbohydrate degradation; L-rhamnose degradation; glycerone phosphate from L-rhamnose: step 3/3. In terms of biological role, catalyzes the reversible cleavage of L-rhamnulose-1-phosphate to dihydroxyacetone phosphate (DHAP) and L-lactaldehyde. The chain is Rhamnulose-1-phosphate aldolase from Klebsiella pneumoniae subsp. pneumoniae (strain ATCC 700721 / MGH 78578).